The following is a 395-amino-acid chain: Elongation factor Tu (395 aa).

A tr-type G domain is found at Lys-10–Val-205. The tract at residues Gly-19 to Thr-26 is G1. Gly-19–Thr-26 is a GTP binding site. Thr-26 provides a ligand contact to Mg(2+). Residues Gly-60–Asn-64 are G2. The interval Asp-81 to Gly-84 is G3. Residues Asp-81–His-85 and Asn-136–Asp-139 contribute to the GTP site. Residues Asn-136–Asp-139 form a G4 region. Residues Ser-173–Phe-175 are G5.

It belongs to the TRAFAC class translation factor GTPase superfamily. Classic translation factor GTPase family. EF-Tu/EF-1A subfamily. In terms of assembly, monomer.

Its subcellular location is the cytoplasm. It carries out the reaction GTP + H2O = GDP + phosphate + H(+). In terms of biological role, GTP hydrolase that promotes the GTP-dependent binding of aminoacyl-tRNA to the A-site of ribosomes during protein biosynthesis. The protein is Elongation factor Tu of Treponema denticola (strain ATCC 35405 / DSM 14222 / CIP 103919 / JCM 8153 / KCTC 15104).